Consider the following 414-residue polypeptide: MMTNLMEQCKVLQNASKQLSSMNTKDKNEALRQVAISLQKNESFIIQENQKDVENAEAKGMKESLVDRLRLTKDRVEGMIKGIQTIIELKDPVWKSNEVWTLENGLTVSKMTVPIGVIGIIYESRPNVTVDAFCLTLKSGNGVLLRGSSTSIFSNRALVHAIKEGLKNSDVSEAVISLIDDPDRGLVKEMLTLNEYIDLIIPRGGKELIDFVVKNATVPTIETGVGNCHIFVDESANIDEAVDIIENAKVQRPGVCNACETVLIHEKIAKDLLPKVSGRIGKQVEIRGCQHTQSLIGGKLAIEDDWAEEFLDYIVAVKVVPNVDEAIEHINHFGTKHSEAILTENLSHANQFLRQVDAAAVYVNASTRFTDGSEFGFGGEMGISTQKIHARGPMGLNELVTVKYTIVGNGQIRK.

The protein belongs to the gamma-glutamyl phosphate reductase family.

It is found in the cytoplasm. It carries out the reaction L-glutamate 5-semialdehyde + phosphate + NADP(+) = L-glutamyl 5-phosphate + NADPH + H(+). Its pathway is amino-acid biosynthesis; L-proline biosynthesis; L-glutamate 5-semialdehyde from L-glutamate: step 2/2. In terms of biological role, catalyzes the NADPH-dependent reduction of L-glutamate 5-phosphate into L-glutamate 5-semialdehyde and phosphate. The product spontaneously undergoes cyclization to form 1-pyrroline-5-carboxylate. This is Gamma-glutamyl phosphate reductase from Alkaliphilus metalliredigens (strain QYMF).